A 453-amino-acid polypeptide reads, in one-letter code: Lipase 9 (453 aa).

Positions 1-14 (MLYLILFLIAPIYA) are cleaved as a signal peptide. Residue Asn36 is glycosylated (N-linked (GlcNAc...) asparagine). Cysteines 110 and 281 form a disulfide. The active-site Charge relay system is Ser194. Residues Asn229, Asn266, and Asn269 are each glycosylated (N-linked (GlcNAc...) asparagine). Catalysis depends on charge relay system residues Asp343 and His376. Cys359 and Cys404 form a disulfide bridge. N-linked (GlcNAc...) asparagine glycosylation occurs at Asn417.

The protein belongs to the AB hydrolase superfamily. Lipase family. Class Lip subfamily.

The protein localises to the secreted. It carries out the reaction a triacylglycerol + H2O = a diacylglycerol + a fatty acid + H(+). In terms of biological role, secreted lipase that is able to hydrolyze both the neutral triacylglycerols and the monopalmitate ester Tween 40, allowing the use of hydrolyzed products as carbon sources. Has broad lipolytic activity, which may be important for colonization and subsequent infection, therefore contributing to the persistence and virulence in human tissue. In Candida albicans (strain SC5314 / ATCC MYA-2876) (Yeast), this protein is Lipase 9.